Consider the following 46-residue polypeptide: Major cold-shock protein (46 aa).

The CSD domain maps to 1-46; the sequence is EKGFGFISPADGSKDVFVHFSAIQSTSFKTLDEGQRVEFTIEQGQK.

In terms of assembly, homodimer.

It is found in the cytoplasm. The polypeptide is Major cold-shock protein (cspA) (Aeromonas salmonicida).